The primary structure comprises 295 residues: Ankyrin repeat and SOCS box protein 17 (295 aa).

The stretch at 146-176 is one ANK repeat; it reads SGITPLFYVAQTRQSNIFKILLQYGILEREK. The 64-residue stretch at 232-295 folds into the SOCS box domain; that stretch reads LGRRPIISNW…RLQNYLNLEI (64 aa).

It belongs to the ankyrin SOCS box (ASB) family.

Its pathway is protein modification; protein ubiquitination. May be a substrate-recognition component of a SCF-like ECS (Elongin-Cullin-SOCS-box protein) E3 ubiquitin-protein ligase complex which mediates the ubiquitination and subsequent proteasomal degradation of target proteins. This chain is Ankyrin repeat and SOCS box protein 17 (ASB17), found in Macaca fascicularis (Crab-eating macaque).